A 335-amino-acid polypeptide reads, in one-letter code: Mesoderm-specific transcript homolog protein (335 aa).

Helical transmembrane passes span 13–33 and 63–83; these read WWVQVGLLAVPLLAAYLHIPP and VGVVGSPEIVVLLHGFPTSSY. One can recognise an AB hydrolase-1 domain in the interval 71-310; the sequence is IVVLLHGFPT…PRSTVSILDD (240 aa). An RVIALD motif is present at residues 98-103; the sequence is RVIALD. Asn-163 carries N-linked (GlcNAc...) asparagine glycosylation. The helical transmembrane segment at 266–286 threads the bilayer; the sequence is VGALASVTIPIHFIYGPLDPV.

It belongs to the AB hydrolase superfamily. Highly expressed in hydatidiform moles, but barely expressed in dermoid cysts. Biallelic expression is detected in blood lymphocytes. Seems to imprinted in an isoform-specific manner rather than in a tissue-specific manner in lymphocytes. Isoform 1 is expressed only from the paternal allele. Isoform 2 is expressed from both the paternal allele and the maternal allele.

It localises to the endoplasmic reticulum membrane. The chain is Mesoderm-specific transcript homolog protein (MEST) from Homo sapiens (Human).